Reading from the N-terminus, the 91-residue chain is Small ribosomal subunit protein bS18 (91 aa).

The protein belongs to the bacterial ribosomal protein bS18 family. Part of the 30S ribosomal subunit. Forms a tight heterodimer with protein bS6.

Functionally, binds as a heterodimer with protein bS6 to the central domain of the 16S rRNA, where it helps stabilize the platform of the 30S subunit. In Wolbachia pipientis wMel, this protein is Small ribosomal subunit protein bS18.